The chain runs to 380 residues: Ubiquitin-like protein 7 (380 aa).

Residues 18 to 98 enclose the Ubiquitin-like domain; the sequence is TPKSILRLPE…VLRKSWPEPD (81 aa). Residues 200–313 are disordered; the sequence is APMPGTDSSS…SSGVQSGTPI (114 aa). The span at 206 to 221 shows a compositional bias: low complexity; that stretch reads DSSSRSMPSSSYRDMP. The residue at position 230 (serine 230) is a Phosphoserine. Low complexity-rich tracts occupy residues 240–253 and 270–293; these read TRSTPSSSTPSSRP and SELATALALASTPESSSHTPTPGT. The span at 294 to 313 shows a compositional bias: polar residues; sequence QGHSSGTSPMSSGVQSGTPI. Residues 333–377 form the UBA domain; sequence SLQSQWQPQLQQLRDMGIQDDELSLRALQATGGDIQAALELIFAG.

In terms of assembly, binds ubiquitin. Interacts with MAVS; this interaction enhances TRIM21-dependent 'Lys-27'-linked polyubiquitination of MAVS. Post-translationally, deubiquitinated by OTUD4 which stabilizes UBL7 expression. Ubiquitous. Highly expressed in heart, skeletal muscle, testis, thyroid and adrenal gland.

Its function is as follows. Interferon-stimulated protein that positively regulates RNA virus-triggered innate immune signaling. Mechanistically, promotes 'Lys-27'-linked polyubiquitination of MAVS through TRIM21 leading to enhanced the IFN signaling pathway. The sequence is that of Ubiquitin-like protein 7 (UBL7) from Homo sapiens (Human).